The sequence spans 88 residues: Putative septation protein SpoVG (88 aa).

It belongs to the SpoVG family.

Its function is as follows. Could be involved in septation. In Desulforudis audaxviator (strain MP104C), this protein is Putative septation protein SpoVG.